The following is a 431-amino-acid chain: Probable 3-hydroxy-3-methylglutaryl-coenzyme A reductase (431 aa).

Residues glutamate 85 and aspartate 278 each act as charge relay system in the active site. The Proton donor role is filled by histidine 375.

It belongs to the HMG-CoA reductase family.

The enzyme catalyses (R)-mevalonate + 2 NAD(+) + CoA = (3S)-3-hydroxy-3-methylglutaryl-CoA + 2 NADH + 2 H(+). The protein operates within metabolic intermediate metabolism; (R)-mevalonate degradation; (S)-3-hydroxy-3-methylglutaryl-CoA from (R)-mevalonate: step 1/1. Its function is as follows. Converts HMG-CoA to mevalonate. The protein is Probable 3-hydroxy-3-methylglutaryl-coenzyme A reductase of Borreliella burgdorferi (strain ATCC 35210 / DSM 4680 / CIP 102532 / B31) (Borrelia burgdorferi).